We begin with the raw amino-acid sequence, 370 residues long: Aminomethyltransferase (370 aa).

Belongs to the GcvT family. As to quaternary structure, the glycine cleavage system is composed of four proteins: P, T, L and H.

The enzyme catalyses N(6)-[(R)-S(8)-aminomethyldihydrolipoyl]-L-lysyl-[protein] + (6S)-5,6,7,8-tetrahydrofolate = N(6)-[(R)-dihydrolipoyl]-L-lysyl-[protein] + (6R)-5,10-methylene-5,6,7,8-tetrahydrofolate + NH4(+). The glycine cleavage system catalyzes the degradation of glycine. In Clostridium botulinum (strain Loch Maree / Type A3), this protein is Aminomethyltransferase.